The sequence spans 269 residues: Basic leucine zipper 19 (269 aa).

The region spanning Asp-140–Leu-196 is the bZIP domain. The segment at Lys-142–Lys-161 is basic motif. The interval Leu-168–Leu-196 is leucine-zipper.

In terms of tissue distribution, expressed in roots and shoots.

The protein resides in the nucleus. Transcription regulator. This is Basic leucine zipper 19 (BZIP19) from Oryza sativa subsp. japonica (Rice).